Here is a 791-residue protein sequence, read N- to C-terminus: MSVAAAGRGFASSLSSPQIRRIALKEAKLTPHIWAALHWNLGLRLVPSVRVGILVLLIFLPSTFCDIGSVYNSSYETVIPERLPGKGGKDPGGKVSYMLLMQGQKQLLHLEVKGHYPENNFPVYSYHNGILRQEMPLLSQDCHYEGYMEGVPGSFVSVNICSGLRGVLIKEETSYGIEPMLSSKNFEHVLYTMEHQPVVSCSVTPKDSPGDTSHPPRSRKPDDLLVLTDWWSHTKYVEMFVVVNHQRFQMWGSNINETVQAVMDIIALANSFTRGINTEVVLVGLEIWTEGDPIEVPVDLQTTLRNFNFWRQEKLVGRVRHDVAHLIVGHRPGENEGQAFLRGACSGEFAAAVEAFHHEDVLLFAALMAHELGHNLGIQHDHPTCTCGPKHFCLMGEKIGKDSGFSNCSSDHFLRFLHDHRGACLLDEPGRQSRMRRAANCGNGVVEDLEECDCGSDCDSHPCCSPTCTLKEGAQCSEGLCCYNCTFKKKGSLCRPAEDVCDLPEYCDGSTQECPANSYMQDGTQCDRIYYCLGGWCKNPDKQCSRIYGYPARSAPEECYISVNTKANRFGNCGHPTSANFRYETCSDEDVFCGKLVCTDVRYLPKVKPLHSLLQVPYGEDWCWSMDAYNITDVPDDGDVQSGTFCAPNKVCMEYICTGRGVLQYNCEPQEMCHGNGVCNNFKHCHCDAGFAPPDCSSPGNGGSVDSGPVGKPADRHLSLSFLAEESPDDKMEDEEVNLKVMVLVVPIFLVVLLCCLMLIAYLWSEVQEVVSPPSSSESSSSSSWSDSDSQ.

The first 65 residues, 1–65 (MSVAAAGRGF…LLIFLPSTFC (65 aa)), serve as a signal peptide directing secretion. Residue asparagine 72 is glycosylated (N-linked (GlcNAc...) asparagine). Positions 201 to 220 (CSVTPKDSPGDTSHPPRSRK) are disordered. Residues 235 to 429 (KYVEMFVVVN…HRGACLLDEP (195 aa)) enclose the Peptidase M12B domain. Asparagine 256 carries an N-linked (GlcNAc...) asparagine glycan. 3 disulfides stabilise this stretch: cysteine 345/cysteine 424, cysteine 385/cysteine 408, and cysteine 387/cysteine 393. Histidine 370 contacts Zn(2+). Glutamate 371 is an active-site residue. Zn(2+) is bound by residues histidine 374 and histidine 380. N-linked (GlcNAc...) asparagine glycans are attached at residues asparagine 407 and asparagine 484. Positions 438–522 (AANCGNGVVE…ECPANSYMQD (85 aa)) constitute a Disintegrin domain. A disulfide bridge connects residues cysteine 494 and cysteine 514. A glycan (N-linked (GlcNAc...) asparagine) is linked at asparagine 630. An EGF-like domain is found at 663–697 (LQYNCEPQEMCHGNGVCNNFKHCHCDAGFAPPDCS). 3 disulfides stabilise this stretch: cysteine 667/cysteine 679, cysteine 673/cysteine 685, and cysteine 687/cysteine 696. A helical transmembrane segment spans residues 741–761 (VMVLVVPIFLVVLLCCLMLIA). Over 762–791 (YLWSEVQEVVSPPSSSESSSSSSWSDSDSQ) the chain is Cytoplasmic. The disordered stretch occupies residues 772–791 (SPPSSSESSSSSSWSDSDSQ).

Heterodimer with ADAM2/fertilin subunit beta. Testis.

Its subcellular location is the membrane. Its function is as follows. May be involved in sperm-egg fusion. The chain is Disintegrin and metalloproteinase domain-containing protein 1a (Adam1a) from Mus musculus (Mouse).